We begin with the raw amino-acid sequence, 404 residues long: uncharacterized protein (404 aa).

Helical transmembrane passes span 16–36 (FAFF…QPLM), 49–69 (AASL…LVFG), 79–99 (PIMG…AFSP), 110–130 (IQGV…GEEI), 133–153 (GSLG…AVFG), 166–186 (WHMA…IFFI), 221–241 (FLIG…IVYV), 252–272 (AFSS…SFIG), 283–303 (ILVM…NNML), 307–327 (ILGI…ASSW), 342–362 (LYLF…GLFW), and 364–384 (GFHW…ALWL).

This sequence belongs to the major facilitator superfamily.

It localises to the cell membrane. This is an uncharacterized protein from Bacillus subtilis (strain 168).